A 286-amino-acid chain; its full sequence is F-box/SPRY domain-containing protein 1 (286 aa).

Position 2 is an N-acetylalanine (Ala2). An F-box domain is found at 33–82; sequence SGVGGRLPSRVLELVFSYLELSELRSCALVCKHWYRCLHGDENSEVWRSL. In terms of domain architecture, B30.2/SPRY spans 92–284; the sequence is LRTDILCNLP…VTLVYLGKPL (193 aa).

The protein belongs to the FBXO45/Fsn family. Forms a complex with MYCBP2 and SKP1. Interacts with HEY1; leading to FBXO45 nuclear translocation. Interacts (via SPRY domain) with CDH2. As to expression, expressed speciffically in the central nervous system, including cerebellum, medulla oblongata, olfactory bulb, hippocampus, cortex and brain stem.

It is found in the secreted. The protein resides in the postsynaptic cell membrane. It localises to the presynaptic cell membrane. The protein localises to the nucleus. It participates in protein modification; protein ubiquitination. Functionally, component of E3 ubiquitin ligase complex consisting of FBXO45, MYCBP2 and SKP1. Functions in substrate recognition but plays also an important role in assembly of the complex. Required for normal neuromuscular synaptogenesis, axon pathfinding and neuronal migration. Regulates neuron migration during brain development through interaction with N-cadherin/CDH2 after secretion via a non-classical mechanism. Plays a role in the regulation of neurotransmission at mature neurons. May control synaptic activity by controlling UNC13A via ubiquitin dependent pathway. Specifically recognizes TP73, promoting its ubiquitination and degradation. Polyubiquitinates NMNAT2, an adenylyltransferase that acts as an axon maintenance factor, and regulates its stability and degradation by the proteasome. Acts also by ubiquitinating FBXW7 during prolonged mitotic arrest and promotes FBXW7 proteasomal degradation. Induces subsequently an increase in mitotic slippage and prevents mitotic cell death. In response to influenza infection, mediates interferon-lambda receptor IFNLR1 polyubiquitination and degradation through the ubiquitin-proteasome system by docking with its intracellular receptor domain. This is F-box/SPRY domain-containing protein 1 from Mus musculus (Mouse).